The following is a 181-amino-acid chain: Oligoribonuclease (181 aa).

The Exonuclease domain maps to 8–171 (LIWIDLEMTG…DDIRESVAEL (164 aa)). The active site involves Tyr129.

The protein belongs to the oligoribonuclease family. As to quaternary structure, homodimer.

The protein localises to the cytoplasm. 3'-to-5' exoribonuclease specific for small oligoribonucleotides. This Escherichia coli O139:H28 (strain E24377A / ETEC) protein is Oligoribonuclease.